Here is a 564-residue protein sequence, read N- to C-terminus: 4-hydroxy-7-methoxy-3-oxo-3,4-dihydro-2H-1,4-benzoxazin-2-yl glucoside beta-D-glucosidase 1d, chloroplastic (564 aa).

A chloroplast-targeting transit peptide spans 1 to 50 (MALLAAATLNPTTHLSLRSRAGRNSENLWLRSAASSQKSKGRFCNLTVRA). A beta-D-glucoside is bound by residues glutamine 92, histidine 194, and 239-240 (NE). Glutamate 240 acts as the Proton donor in catalysis. Residues cysteine 259 and cysteine 265 are joined by a disulfide bond. A beta-D-glucoside-binding positions include tyrosine 383, glutamate 456, tryptophan 504, 511–512 (EW), and phenylalanine 520. Glutamate 456 serves as the catalytic Nucleophile.

It belongs to the glycosyl hydrolase 1 family. In terms of assembly, homo- and heterohexamers. In terms of tissue distribution, expressed in young seedlings early after germination.

Its subcellular location is the plastid. The protein localises to the chloroplast. It catalyses the reaction Hydrolysis of terminal, non-reducing beta-D-glucosyl residues with release of beta-D-glucose.. The catalysed reaction is DIMBOA beta-D-glucoside + H2O = DIMBOA + D-glucose. The enzyme catalyses DIBOA beta-D-glucoside + H2O = DIBOA + D-glucose. Functionally, acts in defense of young plant parts against pests via the production of hydroxamic acids from hydroxamic acid glucosides. Enzymatic activity is highly correlated with plant growth. The preferred substrate is DIMBOA-beta-D-glucoside. The chain is 4-hydroxy-7-methoxy-3-oxo-3,4-dihydro-2H-1,4-benzoxazin-2-yl glucoside beta-D-glucosidase 1d, chloroplastic (GLU1D) from Triticum aestivum (Wheat).